We begin with the raw amino-acid sequence, 238 residues long: Probable transcriptional regulatory protein YeeN (238 aa).

Belongs to the TACO1 family. YeeN subfamily.

It localises to the cytoplasm. The sequence is that of Probable transcriptional regulatory protein YeeN from Salmonella typhi.